Here is a 550-residue protein sequence, read N- to C-terminus: Hydroxylamine reductase (550 aa).

[2Fe-2S] cluster-binding residues include cysteine 3, cysteine 6, cysteine 18, and cysteine 25. Residues histidine 249, glutamate 273, cysteine 317, cysteine 405, cysteine 433, cysteine 458, glutamate 492, and lysine 494 each contribute to the hybrid [4Fe-2O-2S] cluster site. Cysteine 405 is subject to Cysteine persulfide.

Belongs to the HCP family. [2Fe-2S] cluster is required as a cofactor. The cofactor is hybrid [4Fe-2O-2S] cluster.

The protein resides in the cytoplasm. It carries out the reaction A + NH4(+) + H2O = hydroxylamine + AH2 + H(+). Functionally, catalyzes the reduction of hydroxylamine to form NH(3) and H(2)O. The sequence is that of Hydroxylamine reductase from Salmonella paratyphi A (strain ATCC 9150 / SARB42).